A 388-amino-acid chain; its full sequence is 4-hydroxycoumarin synthase 2 (388 aa).

The active site involves Cys-159.

The protein belongs to the thiolase-like superfamily. Chalcone/stilbene synthases family. In terms of assembly, homodimer.

The enzyme catalyses 2-hydroxybenzoyl-CoA + malonyl-CoA = 4-hydroxycoumarin + CO2 + 2 CoA. In terms of biological role, type III polyketide synthase involved preferentially in the biosynthesis of 4-hydroxycoumarin from salicoyl-CoA. Can also use benzoyl-CoA and malonyl-CoA to produce 3,5-dihydroxybiphenyl as a major product and benzoyldiacetic acid lactone as a minor side product. Can also use m-hydroxybenzoyl-CoA as substrate, producing m-hydroxybenzoyl diacetic acid lactone as a derailment product. No activity with p-hydroxybenzoyl-CoA, CoA-linked cinnamic acids or acetyl-CoA. This is 4-hydroxycoumarin synthase 2 (BIS3) from Sorbus aucuparia (European mountain ash).